We begin with the raw amino-acid sequence, 304 residues long: Protein Largen (304 aa).

Polar residues predominate over residues 1–13 (MSAKSKGNPSSSC). Disordered regions lie at residues 1–27 (MSAK…TKVK), 66–91 (QLED…TASS), 114–160 (LTVL…GGLP), and 239–304 (HPPG…TTTV). Positions 33–70 (IVEDLELVLGDLKDVAKELKEVVDQIDTLTSDLQLEDE) form a coiled coil. A compositionally biased stretch (low complexity) spans 77-91 (TDTLNSSSSGTTASS). 3 stretches are compositionally biased toward pro residues: residues 120–129 (PNPPPPPPRL), 239–261 (HPPG…PPFP), and 277–289 (PIRP…PTAP).

Functionally, regulator of cell size that promotes cell size increase independently of mTOR and Hippo signaling pathways. Acts by stimulating the translation of specific mRNAs, including those encoding proteins affecting mitochondrial functions. Increases mitochondrial mass and respiration. In Homo sapiens (Human), this protein is Protein Largen (PRR16).